The sequence spans 143 residues: Large-conductance mechanosensitive channel (143 aa).

A run of 2 helical transmembrane segments spans residues 16 to 36 and 84 to 104; these read VIDLAVGVVIGAAFGKIVTAL and INTVVQFLIIAFAIFLVVKLI.

Belongs to the MscL family. Homopentamer.

It is found in the cell inner membrane. In terms of biological role, channel that opens in response to stretch forces in the membrane lipid bilayer. May participate in the regulation of osmotic pressure changes within the cell. This Xanthomonas axonopodis pv. citri (strain 306) protein is Large-conductance mechanosensitive channel.